The sequence spans 166 residues: MIKAVMMMNTQGKPRLAKFYDYLPVEKQQELIRGVFSVLCSRPENVSNFLEIESLFGPDSRLVYKHYATLYFVLVFDGSENELAMLDLIQVLVETLDKCFSNVCELDIVFNYSKMHAVLDEIVFGGQVLETSSAEVMKAVEEISKLEAASNSISLVPKSVSGWRGR.

This sequence belongs to the adaptor complexes small subunit family. Adaptor protein complex 3 (AP-3) is a heterotetramer composed of two large adaptins (delta-type subunit and beta-type subunit), a medium adaptin (mu-type subunit) and a small adaptin (sigma-type subunit).

The protein resides in the cytoplasm. Its subcellular location is the golgi apparatus. The protein localises to the cytoplasmic vesicle membrane. In terms of biological role, part of the AP-3 complex, an adaptor-related complex which seems to be clathrin-associated. The complex is associated with the Golgi region as well as more peripheral structures. It facilitates the budding of vesicles from the Golgi membrane and may be directly involved in trafficking to the vacuole. It also function in maintaining the identity of lytic vacuoles and in regulating the transition between storage and lytic vacuoles. In Arabidopsis thaliana (Mouse-ear cress), this protein is AP-3 complex subunit sigma.